The following is a 634-amino-acid chain: Threonine--tRNA ligase (634 aa).

Positions Met-1–Thr-61 constitute a TGS domain. Residues Asp-241 to Pro-532 form a catalytic region. 3 residues coordinate Zn(2+): Cys-332, His-383, and His-509.

This sequence belongs to the class-II aminoacyl-tRNA synthetase family. In terms of assembly, homodimer. Zn(2+) is required as a cofactor.

Its subcellular location is the cytoplasm. The enzyme catalyses tRNA(Thr) + L-threonine + ATP = L-threonyl-tRNA(Thr) + AMP + diphosphate + H(+). In terms of biological role, catalyzes the attachment of threonine to tRNA(Thr) in a two-step reaction: L-threonine is first activated by ATP to form Thr-AMP and then transferred to the acceptor end of tRNA(Thr). Also edits incorrectly charged L-seryl-tRNA(Thr). This is Threonine--tRNA ligase from Francisella tularensis subsp. mediasiatica (strain FSC147).